The primary structure comprises 326 residues: Putative replication protein B (326 aa).

It belongs to the ParB family.

The polypeptide is Putative replication protein B (Sinorhizobium fredii (strain NBRC 101917 / NGR234)).